Here is a 101-residue protein sequence, read N- to C-terminus: Small ribosomal subunit protein uS14A (101 aa).

Residues 31 to 69 (IAAPGSSPEERAAAQQELRRQPRDASATRLRNRDAVDGR) form a disordered region. Residues 38–53 (PEERAAAQQELRRQPR) show a composition bias toward basic and acidic residues.

This sequence belongs to the universal ribosomal protein uS14 family. As to quaternary structure, part of the 30S ribosomal subunit. Contacts proteins S3 and S10.

Binds 16S rRNA, required for the assembly of 30S particles and may also be responsible for determining the conformation of the 16S rRNA at the A site. In Saccharopolyspora erythraea (strain ATCC 11635 / DSM 40517 / JCM 4748 / NBRC 13426 / NCIMB 8594 / NRRL 2338), this protein is Small ribosomal subunit protein uS14A.